The chain runs to 153 residues: Ribosomal RNA large subunit methyltransferase H (153 aa).

S-adenosyl-L-methionine is bound by residues leucine 70, glycine 102, and 121 to 126 (LSRMTF).

Belongs to the RNA methyltransferase RlmH family. Homodimer.

It localises to the cytoplasm. The catalysed reaction is pseudouridine(1915) in 23S rRNA + S-adenosyl-L-methionine = N(3)-methylpseudouridine(1915) in 23S rRNA + S-adenosyl-L-homocysteine + H(+). Specifically methylates the pseudouridine at position 1915 (m3Psi1915) in 23S rRNA. This Geotalea daltonii (strain DSM 22248 / JCM 15807 / FRC-32) (Geobacter daltonii) protein is Ribosomal RNA large subunit methyltransferase H.